Here is a 462-residue protein sequence, read N- to C-terminus: Sugar transporter ERD6-like 12 (462 aa).

Helical transmembrane passes span 25–45 (LLIFSTFIIVSASFTFGAAIG), 62–82 (LAQFSLFGSLSTFGGMIGAIF), 101–121 (LFCITGWLAISLAKDIIWLDM), 124–144 (FLVGIGVGLISYVVPVYIAEI), 151–171 (GAFTFSNQLLQNCGVAVVYYF), 179–199 (TLAIIGSIPCWIQVIGLFFIP), 262–282 (LTIGIGLMLLQQLCGTAGISS), 297–317 (IGMMVLSLIVVPKSLMGLILV), 326–346 (LMTSALGLCLSCITLAVAFGV), 358–378 (IFCFIGILSFTMMFAIGMGAL), 399–419 (VTIANWFTGWIANYAFNFMLV), and 424–444 (GTFIISAIICGATIVFTWCLV).

It belongs to the major facilitator superfamily. Sugar transporter (TC 2.A.1.1) family.

It localises to the membrane. In terms of biological role, sugar transporter. This is Sugar transporter ERD6-like 12 (SUGTL5) from Arabidopsis thaliana (Mouse-ear cress).